Reading from the N-terminus, the 332-residue chain is Glyceraldehyde-3-phosphate dehydrogenase (332 aa).

NAD(+) is bound by residues 12 to 13 (RI), D34, K78, and T120. D-glyceraldehyde 3-phosphate-binding positions include 149–151 (SCT), T180, 209–210 (TG), and R232. C150 acts as the Nucleophile in catalysis. N314 contacts NAD(+).

It belongs to the glyceraldehyde-3-phosphate dehydrogenase family. As to quaternary structure, homotetramer.

It localises to the cytoplasm. The enzyme catalyses D-glyceraldehyde 3-phosphate + phosphate + NAD(+) = (2R)-3-phospho-glyceroyl phosphate + NADH + H(+). Its pathway is carbohydrate degradation; glycolysis; pyruvate from D-glyceraldehyde 3-phosphate: step 1/5. Functionally, catalyzes the oxidative phosphorylation of glyceraldehyde 3-phosphate (G3P) to 1,3-bisphosphoglycerate (BPG) using the cofactor NAD. The first reaction step involves the formation of a hemiacetal intermediate between G3P and a cysteine residue, and this hemiacetal intermediate is then oxidized to a thioester, with concomitant reduction of NAD to NADH. The reduced NADH is then exchanged with the second NAD, and the thioester is attacked by a nucleophilic inorganic phosphate to produce BPG. The protein is Glyceraldehyde-3-phosphate dehydrogenase (gapA) of Buchnera aphidicola subsp. Schizaphis graminum (strain Sg).